The following is a 305-amino-acid chain: Putative cuticle collagen 90 (305 aa).

2 disordered regions span residues 95 to 117 (AGPPGPPGLPGKRGDEGVVGDLG) and 146 to 305 (PPGQ…AKRH). Triple-helical region regions lie at residues 96–125 (GPPGPPGLPGKRGDEGVVGDLGRSGASGIS), 142–204 (GPAG…PGTA), 208–252 (GAVG…NGRD), and 256–270 (GQPGKAGEPGAVGKD). The segment covering 150-162 (QGPVGPQGFPGVV) has biased composition (low complexity). The span at 278–288 (ARRDSKTESVH) shows a compositional bias: basic and acidic residues.

Belongs to the cuticular collagen family. In terms of assembly, collagen polypeptide chains are complexed within the cuticle by disulfide bonds and other types of covalent cross-links.

Its function is as follows. Nematode cuticles are composed largely of collagen-like proteins. The cuticle functions both as an exoskeleton and as a barrier to protect the worm from its environment. The chain is Putative cuticle collagen 90 (col-90) from Caenorhabditis elegans.